A 131-amino-acid chain; its full sequence is Arsenate reductase (131 aa).

Residues C10, C82, and C89 each act as nucleophile in the active site. 2 disulfides stabilise this stretch: C10/C82 and C82/C89.

The protein belongs to the low molecular weight phosphotyrosine protein phosphatase family. Thioredoxin-coupled ArsC subfamily.

It is found in the cytoplasm. It carries out the reaction arsenate + [thioredoxin]-dithiol + H(+) = arsenite + [thioredoxin]-disulfide + H2O. Functionally, catalyzes the reduction of arsenate [As(V)] to arsenite [As(III)]. The protein is Arsenate reductase of Staphylococcus aureus (strain bovine RF122 / ET3-1).